We begin with the raw amino-acid sequence, 578 residues long: CTP synthase 2 (578 aa).

One can recognise a Glutamine amidotransferase type-1 domain in the interval 305 to 564 (KIALVGKYTN…VAAASGTLGE (260 aa)). Catalysis depends on for GATase activity residues Cys-404, His-537, and Glu-539.

Belongs to the CTP synthase family. As to quaternary structure, homodimer. Oligomerizes to a tetramer in the presence of its substrates UTP and ATP. Mg(2+) serves as cofactor.

The protein resides in the cytoplasm. The catalysed reaction is UTP + L-glutamine + ATP + H2O = CTP + L-glutamate + ADP + phosphate + 2 H(+). It functions in the pathway pyrimidine metabolism; CTP biosynthesis via de novo pathway; CTP from UDP: step 2/2. Its activity is regulated as follows. Activated by GTP. Subject to allosteric product inhibition by CTP. Inhibited by p-chloromercuriphenylsulfonic acid, N-ethylmaleimide and cyclopentenylcytosine (CPEC). Its function is as follows. Catalyzes the ATP-dependent amination of UTP to CTP with either L-glutamine or ammonia as the source of nitrogen. Plays an important role in the regulation of phospholipid synthesis. The sequence is that of CTP synthase 2 (URA8) from Saccharomyces cerevisiae (strain ATCC 204508 / S288c) (Baker's yeast).